A 387-amino-acid polypeptide reads, in one-letter code: Gamma-butyrobetaine dioxygenase (387 aa).

4 residues coordinate Zn(2+): Cys-38, Cys-40, Cys-43, and His-82. Fe cation contacts are provided by His-202, Asp-204, and His-347. Residue Ser-351 is modified to Phosphoserine.

This sequence belongs to the gamma-BBH/TMLD family. Fe(2+) is required as a cofactor. L-ascorbate serves as cofactor. Highly expressed in kidney; moderately expressed in liver; very low expression in brain.

The protein resides in the cytoplasm. The enzyme catalyses 4-(trimethylamino)butanoate + 2-oxoglutarate + O2 = carnitine + succinate + CO2. It functions in the pathway amine and polyamine biosynthesis; carnitine biosynthesis. Functionally, catalyzes the formation of L-carnitine from gamma-butyrobetaine. This chain is Gamma-butyrobetaine dioxygenase (BBOX1), found in Homo sapiens (Human).